The chain runs to 351 residues: Protein RecA (351 aa).

Residue 67-74 (GPESSGKT) coordinates ATP.

This sequence belongs to the RecA family.

It localises to the cytoplasm. In terms of biological role, can catalyze the hydrolysis of ATP in the presence of single-stranded DNA, the ATP-dependent uptake of single-stranded DNA by duplex DNA, and the ATP-dependent hybridization of homologous single-stranded DNAs. It interacts with LexA causing its activation and leading to its autocatalytic cleavage. The polypeptide is Protein RecA (Mannheimia succiniciproducens (strain KCTC 0769BP / MBEL55E)).